The primary structure comprises 447 residues: MDKSEMDKINGTNPESTDQAPSLASRPDEFEEEESLVTPDALSARIGGFQIYAGSVNWGVFGSMKIVFLKSKLNVLIPCGFLAIFLNYMTQRYGWVFPLSMLGIIPLAERLGFATDWQISCEVGRLLNSAFGNATELIISIHALSRGKLHVVQQCLLGSILSNLLLVLGSAFFSGGLACGKTMQTFSKADAVVNSGLLLMAVMGLLIPAALHYTHSEAQFGKSELALSRFSSCIMLVAYASYLYFQLSNNRRRNEANVYPCMPLIKRRIQDDVDGNDDEVPEISKREAISWIAIFIAWISMLSYYLVDAIDGASKAWNIPVAFISVVLLPVVGNSAGHANAVMFAVKDKLDISLGVAIGSSIQISMFGIPFCVVMGWMMGKPMDLNFHLFETASLLTTVLVVAFLLQDGTSNCVKGLMLFLCYLIVAASFYVHADPNSKASEKPPQN.

The tract at residues 1 to 29 (MDKSEMDKINGTNPESTDQAPSLASRPDE) is disordered. Topologically, residues 1 to 65 (MDKSEMDKIN…VNWGVFGSMK (65 aa)) are cytoplasmic. Residues 10-22 (NGTNPESTDQAPS) show a composition bias toward polar residues. Residues 66-86 (IVFLKSKLNVLIPCGFLAIFL) form a helical membrane-spanning segment. The Extracellular segment spans residues 87–93 (NYMTQRY). Residues 94–114 (GWVFPLSMLGIIPLAERLGFA) traverse the membrane as a helical segment. Topologically, residues 115-122 (TDWQISCE) are cytoplasmic. A helical membrane pass occupies residues 123–143 (VGRLLNSAFGNATELIISIHA). The tract at residues 132-167 (GNATELIISIHALSRGKLHVVQQCLLGSILSNLLLV) is cation selection. The Extracellular segment spans residues 144-159 (LSRGKLHVVQQCLLGS). Residues 160-180 (ILSNLLLVLGSAFFSGGLACG) form a helical membrane-spanning segment. Residues 181–190 (KTMQTFSKAD) are Cytoplasmic-facing. A helical transmembrane segment spans residues 191–211 (AVVNSGLLLMAVMGLLIPAAL). At 212-224 (HYTHSEAQFGKSE) the chain is on the extracellular side. The chain crosses the membrane as a helical span at residues 225–245 (LALSRFSSCIMLVAYASYLYF). Residues 246-286 (QLSNNRRRNEANVYPCMPLIKRRIQDDVDGNDDEVPEISKR) are Cytoplasmic-facing. A helical membrane pass occupies residues 287–307 (EAISWIAIFIAWISMLSYYLV). Over 308 to 318 (DAIDGASKAWN) the chain is Extracellular. Residues 319–339 (IPVAFISVVLLPVVGNSAGHA) traverse the membrane as a helical segment. Positions 333 to 368 (GNSAGHANAVMFAVKDKLDISLGVAIGSSIQISMFG) are cation selection. Residues 340–353 (NAVMFAVKDKLDIS) are Cytoplasmic-facing. A helical transmembrane segment spans residues 354-374 (LGVAIGSSIQISMFGIPFCVV). At 375–384 (MGWMMGKPMD) the chain is on the extracellular side. The chain crosses the membrane as a helical span at residues 385 to 405 (LNFHLFETASLLTTVLVVAFL). Residues 406–413 (LQDGTSNC) are Cytoplasmic-facing. A helical membrane pass occupies residues 414–434 (VKGLMLFLCYLIVAASFYVHA). At 435–447 (DPNSKASEKPPQN) the chain is on the extracellular side.

It belongs to the Ca(2+):cation antiporter (CaCA) (TC 2.A.19) family. Cation/proton exchanger (CAX) subfamily.

It is found in the vacuole membrane. Its function is as follows. Vacuolar cation/proton exchanger (CAX). Translocates Ca(2+) and other metal ions into vacuoles using the proton gradient formed by H(+)-ATPase and H(+)-pyrophosphatase. This chain is Putative vacuolar cation/proton exchanger 4, found in Oryza sativa subsp. japonica (Rice).